Reading from the N-terminus, the 331-residue chain is tRNA (guanine-N(7)-)-methyltransferase (331 aa).

S-adenosyl-L-methionine is bound by residues E29, E55, and D105. D105 is an active-site residue. 2 residues coordinate substrate: K109 and D141.

This sequence belongs to the class I-like SAM-binding methyltransferase superfamily. TrmB family.

The catalysed reaction is guanosine(46) in tRNA + S-adenosyl-L-methionine = N(7)-methylguanosine(46) in tRNA + S-adenosyl-L-homocysteine. The protein operates within tRNA modification; N(7)-methylguanine-tRNA biosynthesis. Its function is as follows. Catalyzes the formation of N(7)-methylguanine at position 46 (m7G46) in tRNA. In Deinococcus geothermalis (strain DSM 11300 / CIP 105573 / AG-3a), this protein is tRNA (guanine-N(7)-)-methyltransferase.